The primary structure comprises 331 residues: Beta-ketoacyl-[acyl-carrier-protein] synthase III (331 aa).

Residues cysteine 113 and histidine 253 contribute to the active site. Residues 254-258 (QANTR) are ACP-binding. Asparagine 283 is an active-site residue.

This sequence belongs to the thiolase-like superfamily. FabH family. Homodimer.

The protein resides in the cytoplasm. The catalysed reaction is malonyl-[ACP] + acetyl-CoA + H(+) = 3-oxobutanoyl-[ACP] + CO2 + CoA. Its pathway is lipid metabolism; fatty acid biosynthesis. In terms of biological role, catalyzes the condensation reaction of fatty acid synthesis by the addition to an acyl acceptor of two carbons from malonyl-ACP. Catalyzes the first condensation reaction which initiates fatty acid synthesis and may therefore play a role in governing the total rate of fatty acid production. Possesses both acetoacetyl-ACP synthase and acetyl transacylase activities. Its substrate specificity determines the biosynthesis of branched-chain and/or straight-chain of fatty acids. The protein is Beta-ketoacyl-[acyl-carrier-protein] synthase III of Desulfitobacterium hafniense (strain DSM 10664 / DCB-2).